A 775-amino-acid polypeptide reads, in one-letter code: Endothelin-converting enzyme-like 1 (775 aa).

At 1–59 (MEPPYSLTAHYDEFQEVKYVSRCGAGGARGASLPPGFPLGAARSATGARSGLPRWNRRE) the chain is on the cytoplasmic side. Residues 60–82 (VCLLSGLVFAAGLCAILAAMLAL) form a helical; Signal-anchor for type II membrane protein membrane-spanning segment. Topologically, residues 83 to 775 (KYLGPVAAGG…MNPAHKCSVW (693 aa)) are lumenal. A Peptidase M13 domain is found at 98-775 (GCPERKAFAR…MNPAHKCSVW (678 aa)). 4 disulfides stabilise this stretch: Cys-123/Cys-760, Cys-131/Cys-720, Cys-187/Cys-441, and Cys-649/Cys-772. Asn-255 and Asn-322 each carry an N-linked (GlcNAc...) asparagine glycan. His-612 is a binding site for Zn(2+). The active site involves Glu-613. His-616 is a Zn(2+) binding site. A glycan (N-linked (GlcNAc...) asparagine) is linked at Asn-656. Position 672 (Glu-672) interacts with Zn(2+). Asp-676 functions as the Proton donor in the catalytic mechanism.

Belongs to the peptidase M13 family. The cofactor is Zn(2+). N-glycosylated. As to expression, highly expressed in the CNS, in particular in putamen, spinal cord, medulla and subthalamic nucleus. A strong signal was also detected in uterine subepithelial cells and around renal blood vessels. Detected at lower levels in amygdala, caudate, thalamus, pancreas and skeletal muscle. Detected at very low levels in substantia nigra, cerebellum, cortex, corpus callosum and hippocampus.

Its subcellular location is the membrane. Its function is as follows. May contribute to the degradation of peptide hormones and be involved in the inactivation of neuronal peptides. This Homo sapiens (Human) protein is Endothelin-converting enzyme-like 1 (ECEL1).